Consider the following 164-residue polypeptide: Leucine-rich single-pass membrane protein 2 (164 aa).

Residues 97-117 (GFLLLLALLVLTCLVLALLAV) form a helical membrane-spanning segment.

It localises to the membrane. The sequence is that of Leucine-rich single-pass membrane protein 2 (LSMEM2) from Homo sapiens (Human).